Here is a 206-residue protein sequence, read N- to C-terminus: MARYIGPKCRLARREGVDLELKSGVRPSESKCNMNAAPGQHGGRRGRLSDYGGQLREKQKLKRTYGVLERQFRNYYKKAVQQKGSTGENLLILLEQRLDNVVYRMGYGSTRAEARQLVSHGAIEVNGQRVTIASYQVQAEDIVSVREQSRKQIRIQSALEIAKQRGFVDWIEVDAAKMSGQFKRVPERIDLSADINESLVVELYSK.

Residues 27-47 (PSESKCNMNAAPGQHGGRRGR) are disordered. The S4 RNA-binding domain maps to 96-158 (QRLDNVVYRM…SRKQIRIQSA (63 aa)).

It belongs to the universal ribosomal protein uS4 family. Part of the 30S ribosomal subunit. Contacts protein S5. The interaction surface between S4 and S5 is involved in control of translational fidelity.

One of the primary rRNA binding proteins, it binds directly to 16S rRNA where it nucleates assembly of the body of the 30S subunit. In terms of biological role, with S5 and S12 plays an important role in translational accuracy. The polypeptide is Small ribosomal subunit protein uS4 (Dichelobacter nodosus (strain VCS1703A)).